A 522-amino-acid polypeptide reads, in one-letter code: Glucans biosynthesis protein G (522 aa).

Positions 1–33 (MLDNKFGFKQRVASLRWLSAAIMLSVSAVPAWA) are cleaved as a signal peptide.

It belongs to the OpgD/OpgG family.

The protein localises to the periplasm. Its pathway is glycan metabolism; osmoregulated periplasmic glucan (OPG) biosynthesis. Functionally, involved in the biosynthesis of osmoregulated periplasmic glucans (OPGs). This is Glucans biosynthesis protein G from Pectobacterium atrosepticum (strain SCRI 1043 / ATCC BAA-672) (Erwinia carotovora subsp. atroseptica).